Here is a 1301-residue protein sequence, read N- to C-terminus: Tyrosine-protein phosphatase 99A (1301 aa).

An N-terminal signal peptide occupies residues 1–28; it reads MPRPQHHALLRAMLKLLLFASIAEHCAT. Topologically, residues 29-394 are extracellular; the sequence is ALPTNSSNSP…RQSHNDYNLA (366 aa). Positions 31 to 63 are disordered; it reads PTNSSNSPSSPSPFTVASLPPTTASSSSSPAVI. Asn-33 is a glycosylation site (N-linked (GlcNAc...) asparagine). Residues 33 to 63 are compositionally biased toward low complexity; it reads NSSNSPSSPSPFTVASLPPTTASSSSSPAVI. Fibronectin type-III domains follow at residues 66-165, 173-269, and 270-376; these read SSFD…YAAV, KPQN…TDVG, and GPSA…LQPN. Residues Asn-176, Asn-212, Asn-278, Asn-322, and Asn-336 are each glycosylated (N-linked (GlcNAc...) asparagine). The chain crosses the membrane as a helical span at residues 395–415; sequence VLVGIIFSCFGIILIIMAFFL. Over 416–1301 the chain is Cytoplasmic; that stretch reads WSRKCFHAAY…TDAQNLDIVG (886 aa). Tyrosine-protein phosphatase domains lie at 476–741 and 764–1016; these read FSRE…LVEA and LEQQ…LSFL. The active-site Phosphocysteine intermediate is Cys-682. The segment covering 1092–1106 has biased composition (polar residues); it reads TALNETVSTPSTDTN. Disordered stretches follow at residues 1092 to 1199 and 1257 to 1281; these read TALN…PTIP and VGDL…NNHI. Residues 1107–1130 show a composition bias toward low complexity; it reads PSLLPILSLLPPTVAPLSSSSSTT. Over residues 1131–1142 the composition is skewed to pro residues; sequence PPTPSTPTPQPP. Polar residues predominate over residues 1150 to 1161; that stretch reads HSPSDLSHQISS. Residues 1162-1188 show a composition bias toward low complexity; that stretch reads TVANAASPVTPATASASAGATPTTPMT. The span at 1264-1273 shows a compositional bias: polar residues; it reads NADNSPTASP.

This sequence belongs to the protein-tyrosine phosphatase family. Receptor class subfamily. Selectively expressed in a subset of axons and pioneer neurons (including aCC and RP2) in the embryo.

Its subcellular location is the membrane. The enzyme catalyses O-phospho-L-tyrosyl-[protein] + H2O = L-tyrosyl-[protein] + phosphate. Functionally, may play a key role in signal transduction and growth control. May have a role in the establishment of the intersegmental and segmental nerves. In Drosophila melanogaster (Fruit fly), this protein is Tyrosine-protein phosphatase 99A (Ptp99A).